The sequence spans 605 residues: Capsid scaffolding protein (605 aa).

Active-site charge relay system residues include H48, S116, and H139. Positions 235–275 (ASDAPDLQKPDKALQSPPPASTDPDTMLSGNAGEGATACGG) are disordered. Residues 281–300 (QDLISVPRNTFMTLLQTNLD) are interaction with pAP. Disordered stretches follow at residues 403 to 432 (DYVP…PGED) and 489 to 588 (PHQS…KSVS). The short motif at 410-416 (RSNKRKR) is the Nuclear localization signal element. Polar residues predominate over residues 568-579 (ASASGVAQSKEP). Residues 585-605 (KSVSAHLKSIFCEELLNKRVA) form an interaction with major capsid protein region.

The protein belongs to the herpesviridae capsid scaffolding protein family. Homomultimer. Interacts with major capsid protein. As to quaternary structure, exists in a monomer-dimer equilibrium with the dimer being the active species. In terms of processing, capsid scaffolding protein is cleaved by assemblin after formation of the spherical procapsid. As a result, the capsid obtains its mature, icosahedral shape. Cleavages occur at two or more sites: release (R-site) and maturation (M-site).

It localises to the host cytoplasm. The protein localises to the host nucleus. The enzyme catalyses Cleaves -Ala-|-Ser- and -Ala-|-Ala- bonds in the scaffold protein.. Its function is as follows. Acts as a scaffold protein by binding major capsid protein in the cytoplasm, inducing the nuclear localization of both proteins. Multimerizes in the nucleus such as major capsid protein forms the icosahedral T=16 capsid. Autocatalytic cleavage releases the assembly protein, and subsequently abolishes interaction with major capsid protein. Cleavages products are evicted from the capsid before or during DNA packaging. Functionally, protease that plays an essential role in virion assembly within the nucleus. Catalyzes the cleavage of the assembly protein after formation of the spherical procapsid. By that cleavage, the capsid matures and gains its icosahedral shape. The cleavage sites seem to include -Ala-Ser-, -Ala-Ala-, as well as Ala-Thr bonds. Assemblin and cleavages products are evicted from the capsid before or during DNA packaging. In terms of biological role, plays a major role in capsid assembly. Acts as a scaffold protein by binding major capsid protein. Multimerizes in the nucleus such as major capsid protein forms the icosahedral T=16 capsid. Cleaved by assemblin after capsid completion. The cleavages products are evicted from the capsid before or during DNA packaging. In Epstein-Barr virus (strain AG876) (HHV-4), this protein is Capsid scaffolding protein.